A 229-amino-acid chain; its full sequence is UPF0441 protein YE3666 (229 aa).

Disordered regions lie at residues 101 to 125 (PAQA…QQSG) and 190 to 229 (KPAV…SMGG). 2 stretches are compositionally biased toward low complexity: residues 109 to 120 (TSSSSSETTAAA) and 214 to 229 (RSAA…SMGG).

It belongs to the UPF0441 family.

In Yersinia enterocolitica serotype O:8 / biotype 1B (strain NCTC 13174 / 8081), this protein is UPF0441 protein YE3666.